We begin with the raw amino-acid sequence, 115 residues long: Peptidyl-tRNA hydrolase (115 aa).

This sequence belongs to the PTH2 family.

The protein localises to the cytoplasm. The enzyme catalyses an N-acyl-L-alpha-aminoacyl-tRNA + H2O = an N-acyl-L-amino acid + a tRNA + H(+). In terms of biological role, the natural substrate for this enzyme may be peptidyl-tRNAs which drop off the ribosome during protein synthesis. This chain is Peptidyl-tRNA hydrolase, found in Methanococcoides burtonii (strain DSM 6242 / NBRC 107633 / OCM 468 / ACE-M).